The following is a 122-amino-acid chain: Large ribosomal subunit protein uL14 (122 aa).

It belongs to the universal ribosomal protein uL14 family. In terms of assembly, part of the 50S ribosomal subunit. Forms a cluster with proteins L3 and L19. In the 70S ribosome, L14 and L19 interact and together make contacts with the 16S rRNA in bridges B5 and B8.

Functionally, binds to 23S rRNA. Forms part of two intersubunit bridges in the 70S ribosome. The protein is Large ribosomal subunit protein uL14 of Ruminiclostridium cellulolyticum (strain ATCC 35319 / DSM 5812 / JCM 6584 / H10) (Clostridium cellulolyticum).